The following is a 457-amino-acid chain: UDP-glycosyltransferase 74C1 (457 aa).

UDP-alpha-D-glucose-binding positions include Thr-281, 336-338 (VPQ), 353-361 (HCGWNSTLE), and 375-378 (WTDQ).

Belongs to the UDP-glycosyltransferase family.

The sequence is that of UDP-glycosyltransferase 74C1 (UGT74C1) from Arabidopsis thaliana (Mouse-ear cress).